We begin with the raw amino-acid sequence, 563 residues long: Inclusion membrane protein M (563 aa).

Topologically, residues 1 to 36 (MVYFRAHQPRHTPKTFPLEVHHSFSDKHPQIAKAMR) are cytoplasmic. Residues 37–57 (ITGIALAALSLLAVVACVIAV) form a helical membrane-spanning segment. A topological domain (vacuolar) is located at residue serine 58. The helical transmembrane segment at 59-79 (AGGAAIPLAVISGIAVMSGLL) threads the bilayer. The Cytoplasmic portion of the chain corresponds to 80-252 (SAATIICSAK…VLKVALSLGV (173 aa)). The chain crosses the membrane as a helical span at residues 253–273 (LAGVAALIIFLPPSLPFIAVI). A topological domain (vacuolar) is located at residue glycine 274. Residues 275 to 295 (VSSLALGMASFLMIRGIKYLL) form a helical membrane-spanning segment. The Cytoplasmic portion of the chain corresponds to 296–563 (EHSPLNRKQL…QLAQYLLDNH (268 aa)).

It belongs to the chlamydial CPn_0065/CT_288/TC_0561 family. Interacts with host CCDC146. In host cells infected with C.trachomatis incM, CCDC146 is recruited to the periphery of the pathogen-containing vacuole but recruitment is not dependent on incM.

It localises to the host vacuole. The protein resides in the host pathogen-containing vacuole. Its subcellular location is the host pathogen-containing vacuole membrane. It is found in the host pathogen-containing vacuole lumen. The protein localises to the secreted. Functionally, interferes with host cell cytokinesis, centrosome positioning and Golgi distribution, and contributes to the morphology and stability of the pathogen-containing vacuole. May exert its effects by acting directly or indirectly on host microtubules. The polypeptide is Inclusion membrane protein M (Chlamydia trachomatis serovar D (strain ATCC VR-885 / DSM 19411 / UW-3/Cx)).